The sequence spans 35 residues: Neurotoxin (35 aa).

Cystine bridges form between Cys7-Cys27, Cys14-Cys32, and Cys18-Cys34.

In terms of tissue distribution, expressed by the venom gland.

It localises to the secreted. Its function is as follows. Neurotoxin. Decreases the action potential of myelinated nerves in mice and frogs. The protein is Neurotoxin of Buthus sp. (strain IY-2001) (Scorpion).